Consider the following 139-residue polypeptide: 3-hydroxyacyl-[acyl-carrier-protein] dehydratase FabZ (139 aa).

The active site involves His47.

Belongs to the thioester dehydratase family. FabZ subfamily.

It localises to the cytoplasm. It carries out the reaction a (3R)-hydroxyacyl-[ACP] = a (2E)-enoyl-[ACP] + H2O. Its function is as follows. Involved in unsaturated fatty acids biosynthesis. Catalyzes the dehydration of short chain beta-hydroxyacyl-ACPs and long chain saturated and unsaturated beta-hydroxyacyl-ACPs. The protein is 3-hydroxyacyl-[acyl-carrier-protein] dehydratase FabZ of Clostridium perfringens (strain ATCC 13124 / DSM 756 / JCM 1290 / NCIMB 6125 / NCTC 8237 / Type A).